The sequence spans 264 residues: Virulence plasmid protein pGP3-D (264 aa).

The chain is Virulence plasmid protein pGP3-D from Chlamydia trachomatis serovar L2 (strain ATCC VR-902B / DSM 19102 / 434/Bu).